The sequence spans 460 residues: Muscarinic acetylcholine receptor M1 (460 aa).

Topologically, residues 1–22 (MNTSAPPAVSPNITVLAPGKGP) are extracellular. N-linked (GlcNAc...) asparagine glycosylation is found at Asn-2 and Asn-12. The helical transmembrane segment at 23–48 (WQVAFIGITTGLLSLATVTGNLLVLI) threads the bilayer. Residues 49–62 (SFKVNTELKTVNNY) are Cytoplasmic-facing. A helical transmembrane segment spans residues 63–84 (FLLSLACADLIIGTFSMNLYTT). Topologically, residues 85–95 (YLLMGHWALGT) are extracellular. Residues 96 to 121 (LACDLWLALDYVASNASVMNLLLISF) traverse the membrane as a helical segment. A disulfide bridge links Cys-98 with Cys-178. Residues 122 to 142 (DRYFSVTRPLSYRAKRTPRRA) lie on the Cytoplasmic side of the membrane. Residues 143–164 (ALMIGLAWLVSFVLWAPAILFW) traverse the membrane as a helical segment. Residues 165-185 (QYLVGERTVLAGQCYIQFLSQ) lie on the Extracellular side of the membrane. Residues 186–209 (PIITFGTAMAAFYLPVTVMCTLYW) form a helical membrane-spanning segment. Over 210-366 (RIYRETESRA…LVKEKKAART (157 aa)) the chain is Cytoplasmic. Disordered stretches follow at residues 225 to 256 (LQGS…GTPP), 274 to 297 (WKEE…EEPG), and 310 to 351 (EAQA…QLAK). Thr-230 carries the post-translational modification Phosphothreonine. The segment covering 238–247 (SSSSERSQPG) has biased composition (low complexity). Positions 328-343 (RPTKKGRDRAGKGQKP) are enriched in basic residues. The helical transmembrane segment at 367-390 (LSAILLAFILTWTPYNIMVLVSTF) threads the bilayer. The Extracellular portion of the chain corresponds to 391–397 (CKDCVPE). Residues 398-420 (TLWELGYWLCYVNSTINPMCYAL) traverse the membrane as a helical segment. Residues 421–460 (CNKAFRDTFRLLLLCRWDKRRWRKIPKRPGSVHRTPSRQC) are Cytoplasmic-facing. Residue Thr-428 is modified to Phosphothreonine. A Phosphoserine modification is found at Ser-451. A Phosphothreonine modification is found at Thr-455. Ser-457 carries the post-translational modification Phosphoserine.

This sequence belongs to the G-protein coupled receptor 1 family. Muscarinic acetylcholine receptor subfamily. CHRM1 sub-subfamily. In terms of assembly, interacts with GPRASP2. Interacts with TMEM147.

Its subcellular location is the cell membrane. It localises to the postsynaptic cell membrane. In terms of biological role, the muscarinic acetylcholine receptor mediates various cellular responses, including inhibition of adenylate cyclase, breakdown of phosphoinositides and modulation of potassium channels through the action of G proteins. Primary transducing effect is Pi turnover. The protein is Muscarinic acetylcholine receptor M1 (CHRM1) of Pongo abelii (Sumatran orangutan).